The sequence spans 301 residues: GTPase Era (301 aa).

The 169-residue stretch at 7–175 (YCGFVAIVGR…AAIVRKHLPE (169 aa)) folds into the Era-type G domain. Residues 15 to 22 (GRPNVGKS) form a G1 region. 15–22 (GRPNVGKS) contacts GTP. The G2 stretch occupies residues 41–45 (QTTRH). Positions 62-65 (DTPG) are G3. GTP-binding positions include 62–66 (DTPGL) and 124–127 (NKVD). The tract at residues 124–127 (NKVD) is G4. Residues 154–156 (ISA) form a G5 region. The region spanning 206-283 (LGAELPYSVT…HLELWVKVKS (78 aa)) is the KH type-2 domain.

The protein belongs to the TRAFAC class TrmE-Era-EngA-EngB-Septin-like GTPase superfamily. Era GTPase family. Monomer.

Its subcellular location is the cytoplasm. It localises to the cell inner membrane. Functionally, an essential GTPase that binds both GDP and GTP, with rapid nucleotide exchange. Plays a role in 16S rRNA processing and 30S ribosomal subunit biogenesis and possibly also in cell cycle regulation and energy metabolism. In Klebsiella pneumoniae subsp. pneumoniae (strain ATCC 700721 / MGH 78578), this protein is GTPase Era.